Consider the following 405-residue polypeptide: Putative polysaccharide ligase RP358 (405 aa).

A run of 10 helical transmembrane segments spans residues 23–43, 77–97, 120–140, 156–178, 201–221, 227–247, 270–290, 322–342, 353–375, and 377–397; these read IAATVAFFLLSIIITGFISFI, LFTAWCFISCLFAVHPINSLV, VLYIKNSLILGIITAILLFFI, FGLYMLDRGCALLSITTWVAIII, ISDSLASFLGFSIGGIIFILA, IFFKLITISLITGSLLFPVIA, LFIWHFVANKIIIRPILGYGF, ILQITLELGILGLALFLCLVY, VSNFRAASYSCFINYYIIGMISY, and IWQTWWILSGIWILVLMKLLV.

It belongs to the O-antigen ligase family.

Its subcellular location is the membrane. The protein is Putative polysaccharide ligase RP358 of Rickettsia prowazekii (strain Madrid E).